Here is a 523-residue protein sequence, read N- to C-terminus: Asc-type amino acid transporter 1 (523 aa).

Residues 1–28 (MAGHTQQPSGRGNPRPAPSPSPVPGTVP) form a disordered region. The segment covering 15 to 25 (RPAPSPSPVPG) has biased composition (pro residues). 9 consecutive transmembrane segments (helical) span residues 40 to 60 (IGLLSACTIIIGNIIGSGIFI), 72 to 92 (VGLALFVWVLGGGVTALGSLC), 113 to 133 (IFGGLAGFLLLWSAVLIMYPT), 268 to 288 (AIFISIPLVTFVYTFTNIAYF), 310 to 330 (LLGYFSWVMPVSVALSTFGGI), 362 to 382 (CTPIPALLVCCGATAVIMLVG), 388 to 408 (INYVSFINYLCYGVTILGLLL), 424 to 444 (LLIPVAYLVFWAFLLVFSFIS), and 448 to 468 (VCGVGVIIILTGVPIFFLGVF). The interval 499–523 (APEEEENGPCPPSLLPATDKPSKPQ) is disordered.

This sequence belongs to the amino acid-polyamine-organocation (APC) superfamily. As to quaternary structure, disulfide-linked heterodimer with the amino acid transport protein SLC3A2/4F2hc. As to expression, expressed in brain, heart, kidney, liver, lung, pancreas, placenta, and skeletal muscle.

Its subcellular location is the cell membrane. It catalyses the reaction L-alanine(in) + glycine(out) = L-alanine(out) + glycine(in). It carries out the reaction L-serine(out) + L-alanine(in) = L-serine(in) + L-alanine(out). The enzyme catalyses L-threonine(out) + L-alanine(in) = L-threonine(in) + L-alanine(out). The catalysed reaction is L-cysteine(out) + L-alanine(in) = L-cysteine(in) + L-alanine(out). It catalyses the reaction 2-aminoisobutanoate(out) + L-alanine(in) = 2-aminoisobutanoate(in) + L-alanine(out). It carries out the reaction D-serine(out) + L-alanine(in) = D-serine(in) + L-alanine(out). The enzyme catalyses D-alanine(out) + L-alanine(in) = D-alanine(in) + L-alanine(out). The catalysed reaction is L-valine(out) + L-alanine(in) = L-valine(in) + L-alanine(out). It catalyses the reaction L-methionine(out) + L-alanine(in) = L-methionine(in) + L-alanine(out). It carries out the reaction beta-alanine(out) + L-alanine(in) = beta-alanine(in) + L-alanine(out). The enzyme catalyses D-cysteine(out) + L-alanine(in) = D-cysteine(in) + L-alanine(out). The catalysed reaction is D-threonine(out) + L-alanine(in) = D-threonine(in) + L-alanine(out). It catalyses the reaction D-isoleucine(out) + D-serine(in) = D-isoleucine(in) + D-serine(out). It carries out the reaction D-serine(in) = D-serine(out). In terms of biological role, associates with SLC3A2/4F2hc to form a functional heterodimeric complex that translocates small neutral L- and D-amino acids across the plasma membrane. Preferentially mediates exchange transport, but can also operate via facilitated diffusion. Acts as a major transporter for glycine, L- and D-serine in the central nervous system. At the spinal cord and brainstem regulates glycine metabolism and glycinergic inhibitory neurotransmission by providing for glycine de novo synthesis from L-serine and glycine recycling from astrocytes to glycinergic motor neurons. At Schaffer collateral-CA1 synapses mediates D-serine and glycine release that modulates post-synaptic activation of NMDA receptors and excitatory glutamatergic transmission. May regulate D-serine release from mesenchymal progenitors located in developing subcutaneous adipose tissue, favoring white adipocyte over thermogenic beige adipocyte lineage commitment. This Homo sapiens (Human) protein is Asc-type amino acid transporter 1 (SLC7A10).